The sequence spans 570 residues: DNA polymerase/3'-5' exonuclease PolX (570 aa).

Positions 1–315 (MHKKDIIRLL…PLIPPEIRES (315 aa)) are DNA polymerase type-X. 3 residues coordinate a divalent metal cation: Asp-193, Asp-195, and Asp-240. The interval 333–570 (QIKGDLHMHS…DVEAFLKRND (238 aa)) is 3'-5' exonuclease. Residues His-339, His-341, His-371, Glu-410, His-437, His-465, Asp-526, and His-528 each coordinate Mn(2+).

This sequence in the N-terminal section; belongs to the DNA polymerase type-X family. In the C-terminal section; belongs to the PHP family. Monomer. It depends on Mn(2+) as a cofactor. The cofactor is Mg(2+).

The catalysed reaction is DNA(n) + a 2'-deoxyribonucleoside 5'-triphosphate = DNA(n+1) + diphosphate. It carries out the reaction Exonucleolytic cleavage in the 3'- to 5'-direction to yield nucleoside 5'-phosphates.. With respect to regulation, the polymerization activity is inhibited in the presence of 2'-3'-dideoxynucleoside 5'-triphosphate (ddNTP). Its function is as follows. Strictly DNA-template-directed DNA polymerase, preferentially acting on DNA structures containing gaps from one to a few nucleotides and bearing a phosphate group at the 5' end of the downstream DNA. The fact that PolX is able to conduct filling of a single-nucleotide gap, allowing further sealing of the resulting nick by a DNA ligase, points to a putative role in base excision repair (BER) during the B.subtilis life cycle. Moreover, also possesses a 3'-5' exonuclease activity able to edit unpaired 3'-termini in a gapped DNA substrate and likely involved in resecting unannealed 3'-termini during DNA repair. The same PolX molecule could perform the subsequent gap-filling step. Does not display 5'-deoxyribose 5'-phosphate (dRP) lyase activity, as predicted by the lack of the lysine and tyrosine residues responsible for the dRP lyase activity in some other PolX members. This is DNA polymerase/3'-5' exonuclease PolX (polX) from Bacillus subtilis (strain 168).